A 270-amino-acid chain; its full sequence is Putative pyruvate, phosphate dikinase regulatory protein 2 (270 aa).

151–158 (GVSRTSKT) lines the ADP pocket.

Belongs to the pyruvate, phosphate/water dikinase regulatory protein family. PDRP subfamily.

It carries out the reaction N(tele)-phospho-L-histidyl/L-threonyl-[pyruvate, phosphate dikinase] + ADP = N(tele)-phospho-L-histidyl/O-phospho-L-threonyl-[pyruvate, phosphate dikinase] + AMP + H(+). It catalyses the reaction N(tele)-phospho-L-histidyl/O-phospho-L-threonyl-[pyruvate, phosphate dikinase] + phosphate + H(+) = N(tele)-phospho-L-histidyl/L-threonyl-[pyruvate, phosphate dikinase] + diphosphate. Functionally, bifunctional serine/threonine kinase and phosphorylase involved in the regulation of the pyruvate, phosphate dikinase (PPDK) by catalyzing its phosphorylation/dephosphorylation. The polypeptide is Putative pyruvate, phosphate dikinase regulatory protein 2 (Listeria monocytogenes serovar 1/2a (strain ATCC BAA-679 / EGD-e)).